Here is a 274-residue protein sequence, read N- to C-terminus: 2,3,4,5-tetrahydropyridine-2,6-dicarboxylate N-succinyltransferase (274 aa).

The substrate site is built by Arg-104 and Asp-141.

This sequence belongs to the transferase hexapeptide repeat family. In terms of assembly, homotrimer.

It localises to the cytoplasm. It carries out the reaction (S)-2,3,4,5-tetrahydrodipicolinate + succinyl-CoA + H2O = (S)-2-succinylamino-6-oxoheptanedioate + CoA. Its pathway is amino-acid biosynthesis; L-lysine biosynthesis via DAP pathway; LL-2,6-diaminopimelate from (S)-tetrahydrodipicolinate (succinylase route): step 1/3. The sequence is that of 2,3,4,5-tetrahydropyridine-2,6-dicarboxylate N-succinyltransferase from Buchnera aphidicola subsp. Baizongia pistaciae (strain Bp).